A 470-amino-acid polypeptide reads, in one-letter code: UDP-glycosyltransferase 72D1 (470 aa).

Residues serine 276, 343-345 (APQ), 360-368 (HCGWSSALE), and 382-385 (YAEQ) each bind UDP-alpha-D-glucose.

It belongs to the UDP-glycosyltransferase family.

The polypeptide is UDP-glycosyltransferase 72D1 (UGT72D1) (Arabidopsis thaliana (Mouse-ear cress)).